The primary structure comprises 82 residues: MMKLVLFSVIVILFSLIGSIHGADVPGNYPLDRSGKKYPCTITWKKNPSCIQICKKHGVKYGYCFDFQCWCEIFGRLKTFKI.

A signal peptide spans 1–22 (MMKLVLFSVIVILFSLIGSIHG). Residues 25-82 (VPGNYPLDRSGKKYPCTITWKKNPSCIQICKKHGVKYGYCFDFQCWCEIFGRLKTFKI) enclose the LCN-type CS-alpha/beta domain. 3 disulfide bridges follow: C40/C64, C50/C69, and C54/C71.

This sequence belongs to the long (3 C-C) scorpion toxin superfamily. Sodium channel inhibitor family. Beta subfamily. As to expression, expressed by the venom gland.

It is found in the secreted. Shifts the voltage of activation of para/tipE voltage-dependent sodium channels (Nav) toward more negative potentials. The protein is Beta-insect toxin AaBTxL1 of Androctonus australis (Sahara scorpion).